A 200-amino-acid polypeptide reads, in one-letter code: ATP synthase subunit s, mitochondrial (200 aa).

The transit peptide at 1-25 directs the protein to the mitochondrion; it reads MMLFGKVSQQLCGIKKLPWSCDSRY. An N-terminal domain region spans residues 1 to 61; sequence MMLFGKVSQQ…SEWLLRCGAM (61 aa). Position 59 (Gly-59) interacts with Mg(2+). LRR repeat units lie at residues 62-87, 88-116, 117-141, and 142-173; these read VRYHGQERWQTDYNHLPTGPLDKYKI, QAIDATNSCIMSIGFDHMVGLQHVEKIRL, CKCHFIEDDCLLRLGQLENLQKSIL, and EMEIISCGNITDKGIIASRHLRNLKYLLLSDL. Mg(2+) is bound at residue Thr-93.

Belongs to the ATP synthase subunit s family. In terms of assembly, homotetramer. Associates with ATP synthase.

Its subcellular location is the mitochondrion. The protein resides in the mitochondrion inner membrane. In terms of biological role, involved in regulation of mitochondrial membrane ATP synthase. Necessary for H(+) conduction of ATP synthase. Facilitates energy-driven catalysis of ATP synthesis by blocking a proton leak through an alternative proton exit pathway. This is ATP synthase subunit s, mitochondrial (DMAC2L) from Macaca fascicularis (Crab-eating macaque).